The chain runs to 398 residues: S-adenosylmethionine synthase (398 aa).

H19 contacts ATP. D21 is a binding site for Mg(2+). A K(+)-binding site is contributed by E47. L-methionine is bound by residues E60 and Q103. The interval 103 to 113 (QSPDIAQGVDV) is flexible loop. Residues 177–179 (DGK), 243–244 (RF), D252, 258–259 (RK), A275, and K279 each bind ATP. Position 252 (D252) interacts with L-methionine. K283 contributes to the L-methionine binding site.

It belongs to the AdoMet synthase family. In terms of assembly, homotetramer; dimer of dimers. It depends on Mg(2+) as a cofactor. Requires K(+) as cofactor.

It is found in the cytoplasm. It carries out the reaction L-methionine + ATP + H2O = S-adenosyl-L-methionine + phosphate + diphosphate. It functions in the pathway amino-acid biosynthesis; S-adenosyl-L-methionine biosynthesis; S-adenosyl-L-methionine from L-methionine: step 1/1. Functionally, catalyzes the formation of S-adenosylmethionine (AdoMet) from methionine and ATP. The overall synthetic reaction is composed of two sequential steps, AdoMet formation and the subsequent tripolyphosphate hydrolysis which occurs prior to release of AdoMet from the enzyme. The protein is S-adenosylmethionine synthase of Symbiobacterium thermophilum (strain DSM 24528 / JCM 14929 / IAM 14863 / T).